Here is a 141-residue protein sequence, read N- to C-terminus: MAKKVSAKIKLALPAGKANPAPPVGPALGQHGVNIMMFCKEYNARTADQVGMVIPVEITVFEDRSFTFVLKTPPASVLLTKAAGVEKGSGKPNKEKAGTITGAQLRQIAEQKLPDLNANDVEAAMKIIAGTARNMGIVIAD.

Belongs to the universal ribosomal protein uL11 family. Part of the ribosomal stalk of the 50S ribosomal subunit. Interacts with L10 and the large rRNA to form the base of the stalk. L10 forms an elongated spine to which L12 dimers bind in a sequential fashion forming a multimeric L10(L12)X complex. One or more lysine residues are methylated.

In terms of biological role, forms part of the ribosomal stalk which helps the ribosome interact with GTP-bound translation factors. The protein is Large ribosomal subunit protein uL11 of Gloeobacter violaceus (strain ATCC 29082 / PCC 7421).